The sequence spans 187 residues: NADH-dependent FMN reductase SfnF (187 aa).

The protein belongs to the SsuE family.

It catalyses the reaction FMNH2 + NAD(+) = FMN + NADH + 2 H(+). Its function is as follows. Involved in the dimethyl sulfide degradation pathway. Catalyzes the NADH-dependent reduction of FMN. This chain is NADH-dependent FMN reductase SfnF, found in Pseudomonas fluorescens (strain Pf0-1).